A 386-amino-acid chain; its full sequence is MKHVFPTYKRFPIDLVNGTGTVVTDKNGKTYLDFTSGIAVCNLGHCPANVAEAVQQQLTNIWHTSNLYECALQDSVAELIADGKDRLVFFCNSGTEANEAALKLARKYTGKEKIITFEKSFHGRTFGSMSATAQAKIHQGFGGLVPGFTYVPYNDIEAFRAEIDEHTAAVMLEVIQGEGGVIPANAAFLLEVQLLCKKMGVLLIIDEVQTGLGRTGTLYGFEQIGLEPDIFTLAKGLGNGLPIGAMVGKANLSSAFGPGSHGSTFGGNKLALAAAKEILRTMKQAGFLEEVNAKADYFRYLLEVHLEALDNVSVIRGGGFLIGIELENTAEPVVTELRDKGLLILTAGANVLRILPPLTVSYAEIDQAIYLLKSVLENQLIGSEEG.

Pyridoxal 5'-phosphate is bound by residues 94-95 and F121; that span reads GT. R124 is a binding site for N(2)-acetyl-L-ornithine. 206–209 serves as a coordination point for pyridoxal 5'-phosphate; it reads DEVQ. Residue K235 is modified to N6-(pyridoxal phosphate)lysine. Residue S263 participates in N(2)-acetyl-L-ornithine binding. Pyridoxal 5'-phosphate is bound at residue T264.

The protein belongs to the class-III pyridoxal-phosphate-dependent aminotransferase family. ArgD subfamily. Homodimer. Pyridoxal 5'-phosphate is required as a cofactor.

The protein resides in the cytoplasm. It catalyses the reaction N(2)-acetyl-L-ornithine + 2-oxoglutarate = N-acetyl-L-glutamate 5-semialdehyde + L-glutamate. It participates in amino-acid biosynthesis; L-arginine biosynthesis; N(2)-acetyl-L-ornithine from L-glutamate: step 4/4. The protein is Acetylornithine aminotransferase of Listeria monocytogenes serotype 4b (strain F2365).